The sequence spans 177 residues: Ribosome rescue factor SmrB (177 aa).

Positions 22-45 (SKKLRQDTIIHQPSKNFSEQQKQR) are disordered. The span at 30–41 (IIHQPSKNFSEQ) shows a compositional bias: polar residues. In terms of domain architecture, Smr spans 98–173 (LDMHGMKQDE…GAGAILVLLS (76 aa)).

This sequence belongs to the SmrB family. As to quaternary structure, associates with collided ribosomes, but not with correctly translating polysomes.

Functionally, acts as a ribosome collision sensor. Detects stalled/collided disomes (pairs of ribosomes where the leading ribosome is stalled and a second ribosome has collided with it) and endonucleolytically cleaves mRNA at the 5' boundary of the stalled ribosome. Stalled/collided disomes form a new interface (primarily via the 30S subunits) that binds SmrB. Cleaved mRNA becomes available for tmRNA ligation, leading to ribosomal subunit dissociation and rescue of stalled ribosomes. In Aliivibrio salmonicida (strain LFI1238) (Vibrio salmonicida (strain LFI1238)), this protein is Ribosome rescue factor SmrB.